A 301-amino-acid chain; its full sequence is 3-dehydroquinate dehydratase (301 aa).

A 3-dehydroquinate dehydratase region spans residues 1–221 (MLQYGVLICG…YYAALLALGI (221 aa)). 3-dehydroquinate is bound by residues 32–34 (ELR) and R63. H119 (proton donor/acceptor) is an active-site residue. Residue K145 is the Schiff-base intermediate with substrate of the active site. 3-dehydroquinate is bound by residues R183, T202, and Q206. Positions 222 to 301 (TPSGGGLPAL…QMCKAVQLVA (80 aa)) constitute a Chorismate mutase domain.

This sequence belongs to the type-I 3-dehydroquinase family. As to quaternary structure, homodimer.

The catalysed reaction is 3-dehydroquinate = 3-dehydroshikimate + H2O. The protein operates within metabolic intermediate biosynthesis; chorismate biosynthesis; chorismate from D-erythrose 4-phosphate and phosphoenolpyruvate: step 3/7. In terms of biological role, involved in the third step of the chorismate pathway, which leads to the biosynthesis of aromatic amino acids. Catalyzes the cis-dehydration of 3-dehydroquinate (DHQ) and introduces the first double bond of the aromatic ring to yield 3-dehydroshikimate. In Pyrobaculum aerophilum (strain ATCC 51768 / DSM 7523 / JCM 9630 / CIP 104966 / NBRC 100827 / IM2), this protein is 3-dehydroquinate dehydratase.